Here is a 57-residue protein sequence, read N- to C-terminus: MAVQQRRVSKSRKGMRRSHDHLTISNTVACNECGKALLPHRACRDCKTYRSIKLSIK.

It belongs to the bacterial ribosomal protein bL32 family.

The polypeptide is Large ribosomal subunit protein bL32 (Ureaplasma parvum serovar 3 (strain ATCC 27815 / 27 / NCTC 11736)).